Reading from the N-terminus, the 251-residue chain is Putative ATP-binding protein Rv3427c in insertion sequence (251 aa).

108 to 115 (GPVGVGKT) serves as a coordination point for ATP.

This sequence belongs to the IS21/IS1162 putative ATP-binding protein family.

The sequence is that of Putative ATP-binding protein Rv3427c in insertion sequence from Mycobacterium tuberculosis (strain ATCC 25618 / H37Rv).